We begin with the raw amino-acid sequence, 577 residues long: MFS-type transporter CPUR_05422 (577 aa).

The tract at residues 1-49 (MSAMSAMGKPEHGSATTSDLEHRATESSLEKQDVEAAPPGPVKPVDPSP) is disordered. Positions 19–34 (DLEHRATESSLEKQDV) are enriched in basic and acidic residues. The span at 38–47 (PPGPVKPVDP) shows a compositional bias: pro residues. Helical transmembrane passes span 52–72 (STLK…LVAV), 93–113 (DVGW…LLFG), 123–143 (VVLL…GAAP), 157–177 (VGSA…IPLA), 184–204 (GLMG…GGAF), 212–232 (WCFY…FFYF), 249–269 (ILSL…CLLL), 285–305 (IIVL…VQIC), 326–346 (FLTT…IPIW), 359–379 (GIQL…GGLL), 383–403 (IGYY…GAGL), 416–436 (VIGY…TPNL), 449–469 (MGIA…VAVG), and 525–545 (VFIV…CMEW). Positions 554 to 577 (PPAGPPAGAPTESAPVETKAAGHT) are disordered.

This sequence belongs to the major facilitator superfamily. TCR/Tet family.

Its subcellular location is the membrane. MFS-type transporter; part of the ergochrome gene cluster responsible for the typical purple-black color of the ergot sclerotia. The ergochrome gene cluster produces several ergot pigments including the yellow ergochrome secalonic acid and its derivatives, as well as the red anthraquinones endocrocin and clavorubin. In Claviceps purpurea (strain 20.1) (Ergot fungus), this protein is MFS-type transporter CPUR_05422.